The chain runs to 124 residues: MPFHLAPYLAKSVPGVGVLGALVGGAAALAKNVRLLKEKRITNTEAAIDTGKETVGAGLATALSAVAATAVGGGLVVSLGTALVAGVAAKYAWDRGVDLVEKELNRGKAANGASDEDILRDELA.

Residues 2–8 (PFHLAPY) are Cytoplasmic-facing. A helical membrane pass occupies residues 9–29 (LAKSVPGVGVLGALVGGAAAL). Residues 30–64 (AKNVRLLKEKRITNTEAAIDTGKETVGAGLATALS) lie on the Lumenal side of the membrane. The tract at residues 36 to 56 (LKEKRITNTEAAIDTGKETVG) is MIC, when fused with the C-terminus of maltose-binding protein (MBP) or expressed as a fragment, improves quality of iron particles during precipitation experiments, binds magnetite. Residues 65 to 85 (AVAATAVGGGLVVSLGTALVA) traverse the membrane as a helical segment. Over 86 to 124 (GVAAKYAWDRGVDLVEKELNRGKAANGASDEDILRDELA) the chain is Cytoplasmic.

The protein belongs to the magnetosome MamC family. As to quaternary structure, probably interacts with MamA.

The protein resides in the magnetosome membrane. Probably involved in magnetite crystal growth. The lumenal domain may bind the magnetite crystals, affecting crystal size and shape. The protein is Magnetosome protein MamC of Paramagnetospirillum magneticum (strain ATCC 700264 / AMB-1) (Magnetospirillum magneticum).